A 2497-amino-acid chain; its full sequence is Integrator complex subunit 1 homolog (2497 aa).

A compositionally biased stretch (basic residues) spans 1–10 (MMLNKIKRSK). Disordered regions lie at residues 1-151 (MMLN…NNNI), 300-337 (QPQP…IKKS), 946-965 (QQQQ…QQPT), 1028-1108 (TTTT…TSSS), 1234-1292 (INNN…NQKS), and 1572-1604 (NNNN…NNIT). Low complexity-rich tracts occupy residues 37-46 (SDNNNNNSND), 60-151 (NNSI…NNNI), 305-333 (QQQQ…QPQQ), 946-963 (QQQQ…QQQQ), and 1028-1058 (TTTT…SSSL). The segment covering 1075–1091 (SGLSGSSNGINQSSDSI) has biased composition (polar residues). 4 stretches are compositionally biased toward low complexity: residues 1097–1108 (STSPTTTTTSSS), 1234–1265 (INNN…NINK), 1272–1289 (HSNS…NKNN), and 1572–1602 (NNNN…NNNN). The stretch at 1645–1675 (RILKNTTQQKQQKQQQKESVQKSIQSLSKLI) forms a coiled coil. Residues 2084–2115 (QQQQQQQQQQQQQQKQQSNNSNNINNNNNNNN) show a composition bias toward low complexity. Disordered stretches follow at residues 2084 to 2123 (QQQQ…QKSK) and 2329 to 2350 (NNNN…NNNN).

Belongs to the Integrator subunit 1 family. As to quaternary structure, component of the Integrator complex. The core complex associates with protein phosphatase 2A subunits to form the Integrator-PP2A (INTAC) complex.

The protein localises to the nucleus. Functionally, component of the integrator complex, a multiprotein complex that terminates RNA polymerase II (Pol II) transcription in the promoter-proximal region of genes. The integrator complex provides a quality checkpoint during transcription elongation by driving premature transcription termination of transcripts that are unfavorably configured for transcriptional elongation: the complex terminates transcription by (1) catalyzing dephosphorylation of the C-terminal domain (CTD) of Pol II subunit polr2a, (2) degrading the exiting nascent RNA transcript via endonuclease activity and (3) promoting the release of Pol II from bound DNA. The integrator complex is also involved in terminating the synthesis of non-coding Pol II transcripts, such as enhancer RNAs (eRNAs), small nuclear RNAs (snRNAs), telomerase RNAs and long non-coding RNAs (lncRNAs). This Dictyostelium discoideum (Social amoeba) protein is Integrator complex subunit 1 homolog (ints1).